Reading from the N-terminus, the 354-residue chain is Inositol-tetrakisphosphate 1-kinase 1 (354 aa).

The span at 1-16 (MRVHEEASEDKEREVE) shows a compositional bias: basic and acidic residues. The interval 1–24 (MRVHEEASEDKEREVEEAPDLMPL) is disordered. Lysine 53 and lysine 95 together coordinate 1D-myo-inositol 1,3,4-trisphosphate. Positions 130 and 180 each coordinate ATP. An ATP-grasp domain is found at 140–347 (LNLSNAYGEV…FLLSLVQNKY (208 aa)). 2 residues coordinate 1D-myo-inositol 1,3,4-trisphosphate: histidine 191 and lysine 223. ATP is bound by residues 212 to 223 (QEFVNHGGILFK) and serine 238. Mg(2+)-binding residues include aspartate 303, aspartate 318, and asparagine 320. Asparagine 320 contributes to the 1D-myo-inositol 1,3,4-trisphosphate binding site.

The protein belongs to the ITPK1 family. As to quaternary structure, monomer. Mg(2+) serves as cofactor. Expressed in roots, leaves, flowers, anthers and embryos.

The enzyme catalyses 1D-myo-inositol 3,4,5,6-tetrakisphosphate + ATP = 1D-myo-inositol 1,3,4,5,6-pentakisphosphate + ADP + H(+). The catalysed reaction is 1D-myo-inositol 1,3,4-trisphosphate + ATP = 1D-myo-inositol 1,3,4,5-tetrakisphosphate + ADP + H(+). It catalyses the reaction 1D-myo-inositol 1,3,4-trisphosphate + ATP = 1D-myo-inositol 1,3,4,6-tetrakisphosphate + ADP + H(+). In terms of biological role, kinase that can phosphorylate various inositol polyphosphate such as Ins(3,4,5,6)P4 or Ins(1,3,4)P3 and participates in phytic acid biosynthesis in developing seeds. Phytic acid is the primary storage form of phosphorus in cereal grains and other plant seeds. This chain is Inositol-tetrakisphosphate 1-kinase 1, found in Oryza sativa subsp. japonica (Rice).